We begin with the raw amino-acid sequence, 385 residues long: Gibberellin 20 oxidase 5 (385 aa).

A Fe2OG dioxygenase domain is found at 224–324 (DGSGIFRCNY…RRSLVFFSCP (101 aa)). Fe cation-binding residues include histidine 249, aspartate 251, and histidine 305. Residue arginine 315 is part of the active site.

The protein belongs to the iron/ascorbate-dependent oxidoreductase family. GA20OX subfamily. The cofactor is Fe(2+). L-ascorbate serves as cofactor. Expressed in 3-day-old seedlings and siliques. Detected in dry seeds, roots, old leaves and inflorescences.

It carries out the reaction gibberellin A12 + 2 2-oxoglutarate + 3 O2 + H(+) = gibberellin A9 + 2 succinate + 3 CO2 + 2 H2O. The enzyme catalyses gibberellin A53 + 2 2-oxoglutarate + 3 O2 + H(+) = gibberellin A20 + 2 succinate + 3 CO2 + 2 H2O. The protein operates within plant hormone biosynthesis; gibberellin biosynthesis. Key oxidase enzyme in the biosynthesis of gibberellin that catalyzes the conversion of GA12 and GA53 to GA9 and GA20 respectively, via a three-step oxidation at C-20 of the GA skeleton. The protein is Gibberellin 20 oxidase 5 (GA20OX5) of Arabidopsis thaliana (Mouse-ear cress).